The chain runs to 87 residues: Large ribosomal subunit protein eL31 (87 aa).

Belongs to the eukaryotic ribosomal protein eL31 family.

The chain is Large ribosomal subunit protein eL31 from Methanoculleus marisnigri (strain ATCC 35101 / DSM 1498 / JR1).